Consider the following 1214-residue polypeptide: Neuronal cell adhesion molecule (1214 aa).

A signal peptide spans 1-29 (MQLKTMPKKKPLSAGRAPLFLFLCQMISA). The Extracellular segment spans residues 30–1077 (LDVPLDPKLL…ASRQVDIATQ (1048 aa)). Ig-like C2-type domains are found at residues 46–134 (PTIT…AAVS) and 141–235 (PSRS…QPIS). Disulfide bonds link Cys68–Cys123 and Cys167–Cys218. N-linked (GlcNAc...) asparagine glycosylation occurs at Asn83. Asn223, Asn245, Asn251, Asn276, Asn314, and Asn377 each carry an N-linked (GlcNAc...) asparagine glycan. 4 Ig-like C2-type domains span residues 267-356 (PPTF…ISVT), 361-448 (PYWI…AFVN), 454-541 (PRIL…VHLE), and 545-626 (PTRF…DSVS). The cysteines at positions 292 and 340 are disulfide-linked. Cys382 and Cys432 are disulfide-bonded. 2 N-linked (GlcNAc...) asparagine glycosylation sites follow: Asn433 and Asn507. 2 disulfide bridges follow: Cys476–Cys525 and Cys567–Cys616. N-linked (GlcNAc...) asparagine glycosylation is found at Asn619, Asn716, Asn802, Asn858, Asn993, Asn1009, and Asn1019. Fibronectin type-III domains are found at residues 649 to 744 (PPFD…TKAA), 746 to 843 (PDQN…SGED), 848 to 950 (APGN…TPEG), and 954 to 1051 (APSS…VDEG). A helical membrane pass occupies residues 1078–1100 (GWFIGLMCAVALLILILLIVCFI). The Cytoplasmic segment spans residues 1101–1214 (RRNKGGKYPV…SPVNAMNSFV (114 aa)). Positions 1109–1129 (PVKEKEDAHADPEIQPMKEDD) are enriched in basic and acidic residues. The disordered stretch occupies residues 1109 to 1214 (PVKEKEDAHA…SPVNAMNSFV (106 aa)). At Thr1131 the chain carries Phosphothreonine. Residue Tyr1135 is modified to Phosphotyrosine. Residue Ser1136 is modified to Phosphoserine. The segment covering 1151-1160 (PSDRTVKKED) has biased composition (basic and acidic residues). 6 positions are modified to phosphoserine: Ser1161, Ser1164, Ser1181, Ser1200, Ser1201, and Ser1205. A compositionally biased stretch (polar residues) spans 1198–1214 (NESSEAPSPVNAMNSFV).

It belongs to the immunoglobulin superfamily. L1/neurofascin/NgCAM family. In terms of assembly, constituent of a NFASC/NRCAM/ankyrin-G complex. Detected in a complex with CNTN1 and PTPRB. Interacts with MYOC. Interacts with GLDN. In terms of tissue distribution, detected in cerebellum Purkinje cells. Detected on nodes of Ranvier and unmyelinated axons in sciatic nerve (at protein level).

The protein localises to the cell membrane. Its subcellular location is the cell projection. It is found in the axon. The protein resides in the secreted. Cell adhesion protein that is required for normal responses to cell-cell contacts in brain and in the peripheral nervous system. Plays a role in neurite outgrowth in response to contactin binding. Plays a role in mediating cell-cell contacts between Schwann cells and axons. Plays a role in the formation and maintenance of the nodes of Ranvier on myelinated axons. Nodes of Ranvier contain clustered sodium channels that are crucial for the saltatory propagation of action potentials along myelinated axons. During development, nodes of Ranvier are formed by the fusion of two heminodes. Required for normal clustering of sodium channels at heminodes; not required for the formation of mature nodes with normal sodium channel clusters. Required, together with GLDN, for maintaining NFASC and sodium channel clusters at mature nodes of Ranvier. The protein is Neuronal cell adhesion molecule (Nrcam) of Rattus norvegicus (Rat).